The primary structure comprises 1263 residues: DNA topoisomerase 2 (1263 aa).

ATP contacts are provided by residues N80, N109, S137–N139, and G150–K157. Positions V329–K331 are interaction with DNA. Q362–K364 provides a ligand contact to ATP. In terms of domain architecture, Toprim spans C439–Q553. Mg(2+)-binding residues include E445, D522, and D524. Positions V737–L1223 constitute a Topo IIA-type catalytic domain. Y828 serves as the catalytic O-(5'-phospho-DNA)-tyrosine intermediate. A disordered region spans residues K977 to K1015. Residues K981–G1000 are compositionally biased toward low complexity. An interaction with DNA region spans residues K1068–N1077. The tract at residues L1244–K1263 is disordered. The span at K1247 to K1263 shows a compositional bias: basic residues.

Belongs to the type II topoisomerase family. Mg(2+) is required as a cofactor. The cofactor is Mn(2+). Ca(2+) serves as cofactor.

It carries out the reaction ATP-dependent breakage, passage and rejoining of double-stranded DNA.. Its function is as follows. Can introduce negative superhelical turns into double-stranded circular DNA. The polypeptide is DNA topoisomerase 2 (TOP2) (Acanthamoeba polyphaga (Amoeba)).